The following is a 516-amino-acid chain: Probable serine/threonine-protein kinase DDB_G0293276 (516 aa).

Residues 69-115 form a disordered region; sequence SIEIDDENPYNTNNNNNSNNNNNNNNNNCNNSNNSNNNKNINSLDNI. Over residues 79–115 the composition is skewed to low complexity; that stretch reads NTNNNNNSNNNNNNNNNNCNNSNNSNNNKNINSLDNI. A Protein kinase domain is found at 232–479; sequence YKHVECIGKG…SKDIKNHPYF (248 aa). ATP is bound by residues 238–246 and Lys-261; that span reads IGKGGYGVV. Asp-350 serves as the catalytic Proton acceptor.

This sequence belongs to the protein kinase superfamily. AGC Ser/Thr protein kinase family.

It carries out the reaction L-seryl-[protein] + ATP = O-phospho-L-seryl-[protein] + ADP + H(+). It catalyses the reaction L-threonyl-[protein] + ATP = O-phospho-L-threonyl-[protein] + ADP + H(+). The sequence is that of Probable serine/threonine-protein kinase DDB_G0293276 from Dictyostelium discoideum (Social amoeba).